We begin with the raw amino-acid sequence, 314 residues long: Olfactory receptor 5D14 (314 aa).

Residues 1 to 27 lie on the Extracellular side of the membrane; sequence MMMVLRNLSMEPTFALLGFTDYPKLQI. N-linked (GlcNAc...) asparagine glycosylation occurs at Asn-7. A helical transmembrane segment spans residues 28–48; sequence PLFLVFLLMYVITVVGNLGMI. Residues 49–56 are Cytoplasmic-facing; the sequence is IIIKINPK. Residues 57–77 form a helical membrane-spanning segment; it reads FHTPMYFFLSHLSFVDFCYSS. Residues 78-101 lie on the Extracellular side of the membrane; the sequence is IVTPKLLENLVMADKSIFYFSCMM. A helical transmembrane segment spans residues 102-122; the sequence is QYFLSCTAVVTESFLLAVMAY. The Cytoplasmic portion of the chain corresponds to 123 to 141; that stretch reads DRFVAICNPLLYTVAMSQR. Residues 142–162 traverse the membrane as a helical segment; sequence LCALLVAGSYLWGMFGPLVLL. The Extracellular portion of the chain corresponds to 163-198; that stretch reads CYALRLNFSGPNVINHFFCEYTALISVSGSDILIPH. Asn-169 is a glycosylation site (N-linked (GlcNAc...) asparagine). The helical transmembrane segment at 199-219 threads the bilayer; the sequence is LLLFSFATFNEMCTLLIILTS. Residues 220-239 are Cytoplasmic-facing; sequence YVFIFVTVLKIRSVSGRHKA. A helical transmembrane segment spans residues 240–260; the sequence is FSTWASHLTSITIFHGTILFL. Residues 261 to 273 are Extracellular-facing; sequence YCVPNSKNSRQTV. The helical transmembrane segment at 274–294 threads the bilayer; that stretch reads KVASVFYTVVNPMLNPLIYSL. The Cytoplasmic portion of the chain corresponds to 295–314; the sequence is RNKDVKDAFWKLIHTQVPFH.

This sequence belongs to the G-protein coupled receptor 1 family.

The protein resides in the cell membrane. Odorant receptor. This Homo sapiens (Human) protein is Olfactory receptor 5D14 (OR5D14).